The chain runs to 813 residues: Enhancer of polycomb homolog 1 (813 aa).

Disordered regions lie at residues 310–403, 484–513, and 528–577; these read FKHQ…PFAF, MLSSPQPSPVNQFANTSEPNTSDRSSSKDL, and FRPR…SSGS. Residues 311–333 are compositionally biased toward basic and acidic residues; that stretch reads KHQDATDSKEFKVNKQDKADLIR. A Glycyl lysine isopeptide (Lys-Gly) (interchain with G-Cter in SUMO2) cross-link involves residue Lys319. Over residues 346-361 the composition is skewed to low complexity; it reads PPSAAAPQQQSPAALP. Polar residues predominate over residues 486–513; it reads SSPQPSPVNQFANTSEPNTSDRSSSKDL. The residue at position 538 (Ser538) is a Phosphoserine. The segment covering 564–577 has biased composition (low complexity); it reads TCSTSTQNRSSSGS. A Glycyl lysine isopeptide (Lys-Gly) (interchain with G-Cter in SUMO2) cross-link involves residue Lys650. The tract at residues 779-813 is disordered; that stretch reads VPSSSSVDSVPRENHESEKPALNNIADNTVAMEVT. Over residues 788 to 797 the composition is skewed to basic and acidic residues; the sequence is VPRENHESEK.

This sequence belongs to the enhancer of polycomb family. As to quaternary structure, component of the NuA4 histone acetyltransferase complex which contains the catalytic subunit KAT5/TIP60 and the subunits EP400, TRRAP/PAF400, BRD8/SMAP, EPC1, DMAP1/DNMAP1, RUVBL1/TIP49, RUVBL2, ING3, actin, ACTL6A/BAF53A, MORF4L1/MRG15, MORF4L2/MRGX, MRGBP, YEATS4/GAS41, VPS72/YL1 and MEAF6. KAT5/TIP60, EPC1, and ING3 together constitute a minimal HAT complex termed Piccolo NuA4. Component of a NuA4-related complex which contains EP400, TRRAP/PAF400, SRCAP, BRD8/SMAP, EPC1, DMAP1/DNMAP1, RUVBL1/TIP49, RUVBL2, actin, ACTL6A/BAF53A, VPS72 and YEATS4/GAS41. Interacts with TRIM27. Interacts with MBTD1; interaction is direct and promotes recruitment of MBTD1 into the NuA4 histone acetyltransferase complex. In terms of tissue distribution, expressed in adult brain, heart, kidney, liver, lung, skeletal muscle and testis. Expressed in male germ cells, present in round spermatids of steps 1 to 4.

The protein localises to the nucleus. It is found in the cytoplasm. In terms of biological role, component of the NuA4 histone acetyltransferase (HAT) complex, a multiprotein complex involved in transcriptional activation of select genes principally by acetylation of nucleosomal histones H4 and H2A. The NuA4 complex plays a direct role in repair of DNA double-strand breaks (DSBs) by promoting homologous recombination (HR). The NuA4 complex is also required for spermatid development by promoting acetylation of histones: histone acetylation is required for histone replacement during the transition from round to elongating spermatids. In the NuA4 complex, EPC1 is required to recruit MBTD1 into the complex. This Mus musculus (Mouse) protein is Enhancer of polycomb homolog 1.